The following is a 114-amino-acid chain: uncharacterized protein (114 aa).

The Fe cation site is built by cysteine 40, cysteine 106, and cysteine 108.

This sequence belongs to the HesB/IscA family. Ycf83 subfamily.

It is found in the plastid. Its subcellular location is the chloroplast. This is an uncharacterized protein from Pyropia yezoensis (Susabi-nori).